The primary structure comprises 286 residues: 33 kDa chaperonin (286 aa).

2 cysteine pairs are disulfide-bonded: Cys-225–Cys-227 and Cys-258–Cys-261.

The protein belongs to the HSP33 family. In terms of processing, under oxidizing conditions two disulfide bonds are formed involving the reactive cysteines. Under reducing conditions zinc is bound to the reactive cysteines and the protein is inactive.

Its subcellular location is the cytoplasm. Functionally, redox regulated molecular chaperone. Protects both thermally unfolding and oxidatively damaged proteins from irreversible aggregation. Plays an important role in the bacterial defense system toward oxidative stress. The protein is 33 kDa chaperonin of Shewanella loihica (strain ATCC BAA-1088 / PV-4).